Consider the following 300-residue polypeptide: Protoheme IX farnesyltransferase (300 aa).

The next 9 membrane-spanning stretches (helical) occupy residues 24 to 44 (VTQL…PGMV), 48 to 68 (VLIG…AINC), 94 to 114 (PQIL…LYTF), 118 to 138 (LTMW…TLLL), 146 to 166 (IVIG…AVTG), 172 to 192 (AWIL…VLAL), 217 to 237 (LHIL…FISG), 239 to 259 (SGAV…AYAW), and 278 to 298 (IVYL…RPLL).

Belongs to the UbiA prenyltransferase family. Protoheme IX farnesyltransferase subfamily.

It localises to the cell inner membrane. It carries out the reaction heme b + (2E,6E)-farnesyl diphosphate + H2O = Fe(II)-heme o + diphosphate. Its pathway is porphyrin-containing compound metabolism; heme O biosynthesis; heme O from protoheme: step 1/1. In terms of biological role, converts heme B (protoheme IX) to heme O by substitution of the vinyl group on carbon 2 of heme B porphyrin ring with a hydroxyethyl farnesyl side group. This chain is Protoheme IX farnesyltransferase, found in Burkholderia vietnamiensis (strain G4 / LMG 22486) (Burkholderia cepacia (strain R1808)).